Consider the following 193-residue polypeptide: MYQDLIRSELKEAAETLNNFLSDDANIQSIQNAAVLLANAFKAGGKVISCGNGGSHCDAMHFAEELTGRYRENRPGYPAIAISDPSHLSCVSNDFGYDFVFSRYVESLGREGDVLLGISTSGNSGNIIKAIAAAKAKGMKVITLTGKDGGKMAGSADVEIRVPHFGYADRIQEIHIKAIHILIQLIEKEMADQ.

The SIS domain occupies 37 to 193 (LANAFKAGGK…QLIEKEMADQ (157 aa)). A substrate-binding site is contributed by 52–54 (NGG). The Zn(2+) site is built by H61 and E65. Substrate is bound by residues E65, 93–94 (ND), 119–121 (STS), S124, and Q172. Zn(2+) is bound by residues Q172 and H180.

It belongs to the SIS family. GmhA subfamily. Homotetramer. Requires Zn(2+) as cofactor.

The protein localises to the cytoplasm. It carries out the reaction 2 D-sedoheptulose 7-phosphate = D-glycero-alpha-D-manno-heptose 7-phosphate + D-glycero-beta-D-manno-heptose 7-phosphate. It functions in the pathway carbohydrate biosynthesis; D-glycero-D-manno-heptose 7-phosphate biosynthesis; D-glycero-alpha-D-manno-heptose 7-phosphate and D-glycero-beta-D-manno-heptose 7-phosphate from sedoheptulose 7-phosphate: step 1/1. Functionally, catalyzes the isomerization of sedoheptulose 7-phosphate in D-glycero-D-manno-heptose 7-phosphate. The sequence is that of Phosphoheptose isomerase from Pectobacterium atrosepticum (strain SCRI 1043 / ATCC BAA-672) (Erwinia carotovora subsp. atroseptica).